The sequence spans 428 residues: Chaperone SurA (428 aa).

Residues 1 to 20 form the signal peptide; the sequence is MKNWKTLLLGIAMIANTSFA. 2 consecutive PpiC domains span residues 171–272 and 282–382; these read STEL…KVND and VTEV…ELLD.

The protein resides in the periplasm. It carries out the reaction [protein]-peptidylproline (omega=180) = [protein]-peptidylproline (omega=0). In terms of biological role, chaperone involved in the correct folding and assembly of outer membrane proteins. Recognizes specific patterns of aromatic residues and the orientation of their side chains, which are found more frequently in integral outer membrane proteins. May act in both early periplasmic and late outer membrane-associated steps of protein maturation. This Salmonella paratyphi A (strain ATCC 9150 / SARB42) protein is Chaperone SurA.